Consider the following 222-residue polypeptide: Putative adhesin RP828 (222 aa).

The signal sequence occupies residues 1–22; sequence MKKLLLIATASATILSSSVSFA.

Its function is as follows. Adheres to biotinylated epithelial (Vero cell) proteins. In Rickettsia prowazekii (strain Madrid E), this protein is Putative adhesin RP828.